The primary structure comprises 350 residues: Ceramide synthase 1 (350 aa).

An N-acetylalanine modification is found at A2. A run of 6 helical transmembrane segments spans residues A53–L73, A103–T123, I148–Y168, S176–F196, A239–F259, and L287–A307. Residues A97–T311 enclose the TLC domain.

Post-translationally, acetylated. Deacetylation by SIRT3 increases enzyme activity and promotes mitochondrial ceramide accumulation.

The protein localises to the endoplasmic reticulum membrane. The enzyme catalyses a sphingoid base + octadecanoyl-CoA = an N-octadecanoyl-sphingoid base + CoA + H(+). It catalyses the reaction sphinganine + octadecanoyl-CoA = N-(octadecanoyl)-sphinganine + CoA + H(+). The catalysed reaction is hexadecasphinganine + octadecanoyl-CoA = N-octadecanoylhexadecasphinganine + CoA + H(+). It carries out the reaction sphing-4-enine + octadecanoyl-CoA = N-octadecanoylsphing-4-enine + CoA + H(+). The enzyme catalyses heptadecasphing-4-enine + octadecanoyl-CoA = N-octadecanoyl-heptadecasphing-4-enine + CoA + H(+). It catalyses the reaction 2-hydroxyoctadecanoyl-CoA + sphinganine = N-(2-hydroxyoctadecanoyl)-sphinganine + CoA + H(+). The catalysed reaction is eicosanoyl-CoA + sphinganine = N-eicosanoylsphinganine + CoA + H(+). Its pathway is lipid metabolism; sphingolipid metabolism. Inhibited by fumonisin B1. Ceramide synthase that catalyzes the transfer of the acyl chain from acyl-CoA to a sphingoid base, with high selectivity toward stearoyl-CoA (octadecanoyl-CoA; C18:0-CoA). N-acylates sphinganine and sphingosine bases to form dihydroceramides and ceramides in de novo synthesis and salvage pathways, respectively. Plays a predominant role in skeletal muscle in regulating C18 ceramide and dihydroceramide levels with an impact on whole-body glucose metabolism and insulin sensitivity. Protects from diet-induced obesity by suppressing the uptake of glucose in multiple organs in a FGF21-dependent way. Generates C18 ceramides in the brain, playing a critical role in cerebellar development and Purkinje cell function. In response to cellular stress mediates mitophagy, a known defense mechanism against cell transformation and aging. Upon mitochondria fission, generates C18 ceramides that anchor lipidated MAP1LC3B/LC3B-II autophagolysosomes to outer mitochondrial membranes to eliminate damaged mitochondria. This is Ceramide synthase 1 from Homo sapiens (Human).